A 628-amino-acid chain; its full sequence is Kelch-like protein 14 (628 aa).

Residues 33 to 151 enclose the BTB domain; the sequence is CDVTLTAQGQ…LYTANVTLSL (119 aa). The disordered stretch occupies residues 69-115; sequence GGGVGGQDGLGAPKDQQQPPQQQPSQQQQPPPQEEPGTPSSSPDDKL. The segment covering 84-96 has biased composition (low complexity); sequence QQQPPQQQPSQQQ. A BACK domain is found at 210-279; sequence VEDVLLLNFE…PAPELVERVQ (70 aa). Kelch repeat units lie at residues 323–372, 373–424, 425–471, 473–518, 520–570, and 572–620; these read MLLL…EVEN, FLFV…RLDK, HLYV…VHNG, IYIS…VMND, LYAI…VLDD, and IYLV…TVIL.

In terms of assembly, interacts with TOR1A, preferentially with the ATP-free form.

It is found in the cytoplasm. The protein resides in the cytosol. Its subcellular location is the endoplasmic reticulum membrane. This chain is Kelch-like protein 14 (KLHL14), found in Homo sapiens (Human).